An 825-amino-acid chain; its full sequence is Zygotic DNA replication licensing factor mcm6-B (825 aa).

Residues 159 to 186 (CLDCQTLVRDVEQQFKYTQPSICRNPVC) form a C4-type zinc finger. The MCM domain occupies 347–554 (LYHNLCTSLF…TDYAIARRIV (208 aa)). 397 to 404 (GDPSTAKS) is a binding site for ATP. The Arginine finger signature appears at 529–532 (SRFD). Positions 668 to 679 (DQEDEHEVEEPQ) are enriched in acidic residues. The disordered stretch occupies residues 668 to 690 (DQEDEHEVEEPQEGINGDADVPN).

It belongs to the MCM family. In terms of assembly, component of the mcm2-7 complex (RLF-M). The complex forms a toroidal hexameric ring with the proposed subunit order mcm2-mcm6-mcm4-mcm7-mcm3-mcm5 (By simililarity). Begins to associate with zmcm3, mcm4 and mcm7 into mcm complexes at the neurula stage.

It localises to the nucleus. It carries out the reaction ATP + H2O = ADP + phosphate + H(+). Acts as a component of the mcm2-7 complex (mcm complex) which is the putative replicative helicase essential for 'once per cell cycle' DNA replication initiation and elongation in eukaryotic cells. The active ATPase sites in the mcm2-7 ring are formed through the interaction surfaces of two neighboring subunits such that a critical structure of a conserved arginine finger motif is provided in trans relative to the ATP-binding site of the Walker A box of the adjacent subunit. The six ATPase active sites, however, are likely to contribute differentially to the complex helicase activity. The existence of maternal and zygotic forms of mcm3 and mcm6 suggests that specific forms of mcm2-7 complexes may be used during different stages of development. May replace mmcm6 in the mcm2-7 complex. The chain is Zygotic DNA replication licensing factor mcm6-B (zmcm6-b) from Xenopus laevis (African clawed frog).